The primary structure comprises 359 residues: Golgi-resident adenosine 3',5'-bisphosphate 3'-phosphatase (359 aa).

Met-1 is modified (N-acetylmethionine). Topologically, residues 1-12 (MAPMGIRLSPLG) are cytoplasmic. A helical transmembrane segment spans residues 13–33 (VAVFCLLGLGVLYHLYSGFLA). Residues 34 to 359 (GRFSLFGLGG…LPDLEKTGHK (326 aa)) lie on the Lumenal side of the membrane. The tract at residues 86-106 (ESNVLHEKSKGKTREGAEDKM) is disordered. The Proton acceptor role is filled by Asp-110. Mg(2+) is bound by residues Glu-133, Asp-174, Leu-176, and Asp-177. Residue Thr-179 is the Proton acceptor of the active site. Ser-242 and His-245 together coordinate AMP. N-linked (GlcNAc...) asparagine glycosylation occurs at Asn-259. Gly-268 and Lys-272 together coordinate AMP. Residue Asp-300 coordinates Mg(2+).

Belongs to the inositol monophosphatase superfamily. It depends on Mg(2+) as a cofactor. Contains N-linked glycan resistant to endoglycosydase H.

It is found in the golgi apparatus. Its subcellular location is the trans-Golgi network membrane. It carries out the reaction adenosine 3',5'-bisphosphate + H2O = AMP + phosphate. The protein operates within sulfur metabolism. Its activity is regulated as follows. Strongly inhibited by lithium. Its function is as follows. Exhibits 3'-nucleotidase activity toward adenosine 3',5'-bisphosphate (PAP), namely hydrolyzes adenosine 3',5'-bisphosphate into adenosine 5'-monophosphate (AMP) and a phosphate. May play a role in the formation of skeletal elements derived through endochondral ossification, possibly by clearing adenosine 3',5'-bisphosphate produced by Golgi sulfotransferases during glycosaminoglycan sulfation. Has no activity toward 3'-phosphoadenosine 5'-phosphosulfate (PAPS) or inositol phosphate (IP) substrates including I(1)P, I(1,4)P2, I(1,3,4)P3, I(1,4,5)P3 and I(1,3,4,5)P4. The polypeptide is Golgi-resident adenosine 3',5'-bisphosphate 3'-phosphatase (Homo sapiens (Human)).